Here is a 59-residue protein sequence, read N- to C-terminus: MAVQQNKKSPSKRGMHRAHDFLTAPSLAVEPTTGEVHLRHHISPNGFYRGKKVVKAKGE.

Residues 1-25 (MAVQQNKKSPSKRGMHRAHDFLTAP) are disordered.

The protein belongs to the bacterial ribosomal protein bL32 family.

In Azoarcus sp. (strain BH72), this protein is Large ribosomal subunit protein bL32.